Consider the following 351-residue polypeptide: Fe(3+) ions import ATP-binding protein FbpC (351 aa).

The ABC transporter domain occupies 9–239 (LVLKNINKTF…PNSLFLANFM (231 aa)). 41–48 (GPSGCGKT) serves as a coordination point for ATP.

This sequence belongs to the ABC transporter superfamily. Fe(3+) ion importer (TC 3.A.1.10) family. In terms of assembly, the complex is composed of two ATP-binding proteins (FbpC), two transmembrane proteins (FbpB) and a solute-binding protein (FbpA).

It localises to the cell inner membrane. It catalyses the reaction Fe(3+)(out) + ATP + H2O = Fe(3+)(in) + ADP + phosphate + H(+). Its function is as follows. Part of the ABC transporter complex FbpABC involved in Fe(3+) ions import. Responsible for energy coupling to the transport system. This Mannheimia succiniciproducens (strain KCTC 0769BP / MBEL55E) protein is Fe(3+) ions import ATP-binding protein FbpC.